Reading from the N-terminus, the 739-residue chain is Thiamine biosynthesis multifunctional protein ThiED (739 aa).

The tract at residues 1–210 (MTDFSLYLVT…PSPAEAAREL (210 aa)) is thiamine-phosphate synthase. 4-amino-2-methyl-5-(diphosphooxymethyl)pyrimidine contacts are provided by residues 37–41 (QLRDK) and asparagine 69. Aspartate 70 and aspartate 88 together coordinate Mg(2+). Residue threonine 107 participates in 4-amino-2-methyl-5-(diphosphooxymethyl)pyrimidine binding. Residue 140–142 (TDT) participates in 2-[(2R,5Z)-2-carboxy-4-methylthiazol-5(2H)-ylidene]ethyl phosphate binding. Lysine 143 provides a ligand contact to 4-amino-2-methyl-5-(diphosphooxymethyl)pyrimidine. 2-[(2R,5Z)-2-carboxy-4-methylthiazol-5(2H)-ylidene]ethyl phosphate contacts are provided by residues glycine 174 and 194 to 195 (VS). The hydroxymethylpyrimidine/phosphomethylpyrimidine kinase stretch occupies residues 226 to 481 (LTIAGTDPTG…GSGSGPVDHF (256 aa)). 4-amino-5-hydroxymethyl-2-methylpyrimidine is bound at residue glutamine 263. The thiaminase-2 stretch occupies residues 527 to 739 (YTRALWEATG…FDQATRQGWN (213 aa)).

The protein in the N-terminal section; belongs to the thiamine-phosphate synthase family. In the central section; belongs to the ThiD family. It in the C-terminal section; belongs to the thiaminase-2 family. It depends on Mg(2+) as a cofactor.

It catalyses the reaction 2-[(2R,5Z)-2-carboxy-4-methylthiazol-5(2H)-ylidene]ethyl phosphate + 4-amino-2-methyl-5-(diphosphooxymethyl)pyrimidine + 2 H(+) = thiamine phosphate + CO2 + diphosphate. The catalysed reaction is 2-(2-carboxy-4-methylthiazol-5-yl)ethyl phosphate + 4-amino-2-methyl-5-(diphosphooxymethyl)pyrimidine + 2 H(+) = thiamine phosphate + CO2 + diphosphate. The enzyme catalyses 4-methyl-5-(2-phosphooxyethyl)-thiazole + 4-amino-2-methyl-5-(diphosphooxymethyl)pyrimidine + H(+) = thiamine phosphate + diphosphate. It carries out the reaction 4-amino-5-hydroxymethyl-2-methylpyrimidine + ATP = 4-amino-2-methyl-5-(phosphooxymethyl)pyrimidine + ADP + H(+). It catalyses the reaction 4-amino-2-methyl-5-(phosphooxymethyl)pyrimidine + ATP = 4-amino-2-methyl-5-(diphosphooxymethyl)pyrimidine + ADP. The protein operates within cofactor biosynthesis; thiamine diphosphate biosynthesis; 4-amino-2-methyl-5-diphosphomethylpyrimidine from 5-amino-1-(5-phospho-D-ribosyl)imidazole: step 3/3. It participates in cofactor biosynthesis; thiamine diphosphate biosynthesis; thiamine phosphate from 4-amino-2-methyl-5-diphosphomethylpyrimidine and 4-methyl-5-(2-phosphoethyl)-thiazole: step 1/1. Functionally, condenses 4-methyl-5-(beta-hydroxyethyl)thiazole monophosphate (THZ-P) and 2-methyl-4-amino-5-hydroxymethyl pyrimidine pyrophosphate (HMP-PP) to form thiamine monophosphate (TMP). Catalyzes the phosphorylation of hydroxymethylpyrimidine phosphate (HMP-P) to HMP-PP, and of HMP to HMP-P. The protein is Thiamine biosynthesis multifunctional protein ThiED (thiED) of Corynebacterium efficiens (strain DSM 44549 / YS-314 / AJ 12310 / JCM 11189 / NBRC 100395).